The primary structure comprises 528 residues: Ladinin-1 (528 aa).

The disordered stretch occupies residues 1-404; it reads MSVSRKDWSA…NSETPLTRSA (404 aa). A phosphoserine mark is found at Ser-38, Ser-56, Ser-62, Ser-72, and Ser-76. The span at 88 to 97 shows a compositional bias: basic residues; it reads RTRKERRQRR. A Phosphoserine modification is found at Ser-119. Residues 134–173 are compositionally biased toward basic and acidic residues; sequence KKVEALPRRRLSREQRGPWAQDEERLKNRELAEGEKRLPE. SEK repeat units lie at residues 184–186, 190–192, 202–204, and 208–210; these read SEK. Positions 184–281 are 6 X SEK repeats; that stretch reads SEKTPVSEKT…MQERKLVSEK (98 aa). Composition is skewed to basic and acidic residues over residues 218 to 231 and 267 to 279; these read SLTEKRHSPEKLVP and IVSEKMQERKLVS. SEK repeat units lie at residues 269-271 and 279-281; these read SEK. The span at 304 to 316 shows a compositional bias: polar residues; it reads EQPQTTGGSQATT. Phosphoserine occurs at positions 328, 358, 367, 405, and 496. Positions 365 to 377 are enriched in low complexity; it reads TPSPTLLTYSSSL. The tract at residues 492–528 is disordered; that stretch reads KTQDSGDHGSQEVRKEASVTKRAQWGSKPSTSLDAEV. The span at 495-510 shows a compositional bias: basic and acidic residues; sequence DSGDHGSQEVRKEASV. Polar residues predominate over residues 518-528; the sequence is SKPSTSLDAEV.

In terms of tissue distribution, expressed in kidney, lung and keratinocytes followed by liver, spleen and brain. Not expressed in testis, skeletal and heart muscle and in fibroblasts.

It localises to the secreted. It is found in the extracellular space. The protein resides in the extracellular matrix. Its subcellular location is the basement membrane. Functionally, anchoring filament protein which is a component of the basement membrane zone. The sequence is that of Ladinin-1 (Lad1) from Mus musculus (Mouse).